Reading from the N-terminus, the 564-residue chain is Lamassu protein LmuB (564 aa).

Functionally, component of antiviral defense system Lamassu type II, composed of LmuA and LmuB. Expression of Lamassu type II in B.subtilis (strain BEST7003) confers resistance to phage SpBeta. May be an ATPase. In Bacillus cereus (strain VD014), this protein is Lamassu protein LmuB.